A 519-amino-acid chain; its full sequence is Zinc finger protein 692 (519 aa).

Residues 123–314 are disordered; that stretch reads GPSLSPTPSE…PAWDEDTAQI (192 aa). Residues 145–155 show a composition bias toward polar residues; that stretch reads RSWCSEATSGQ. A Phosphoserine modification is found at serine 162. Positions 164-173 are enriched in basic and acidic residues; that stretch reads HDERTQEARL. The segment covering 177–187 has biased composition (pro residues); it reads VGPPPETFPPP. Over residues 188 to 206 the composition is skewed to acidic residues; the sequence is GEEEGEEEEDNDEDEEEML. Phosphoserine is present on serine 231. A compositionally biased stretch (low complexity) spans 247 to 266; sequence AALSSPLAVPALSASSLSSR. Positions 277–303 are enriched in polar residues; that stretch reads PQLSRTPQAAQQTEALASTGSQAQSAP. 5 consecutive C2H2-type zinc fingers follow at residues 328-353, 359-383, 389-411, 417-439, and 448-471; these read MPCD…KYQH, FSCP…MKLH, YICE…RRIH, LQCE…QRKH, and FPCE…SKSH. Residues 469-519 are disordered; the sequence is KSHPALLLAPQESPSGPLEPCPSISAPGPLGSSEGSRPSASPQAPTLLPQQ. Residue serine 470 is modified to Phosphoserine; by AMPK. Over residues 501–519 the composition is skewed to polar residues; that stretch reads SEGSRPSASPQAPTLLPQQ.

It belongs to the krueppel C2H2-type zinc-finger protein family. Phosphorylation at Ser-470 results in loss of DNA-binding activity. In terms of tissue distribution, ubiquitous. Highly expressed in brain, thymus and spleen.

It is found in the nucleus. May act as an transcriptional repressor for PCK1 gene expression, in turn may participate in the hepatic gluconeogenesis regulation through the activated AMPK signaling pathway. The polypeptide is Zinc finger protein 692 (ZNF692) (Homo sapiens (Human)).